A 530-amino-acid polypeptide reads, in one-letter code: MTTPISLSKPRVELRFKCSHLKNLDICSKSDPLIMVFDKRGEHGESIFVGQTEKINNNLNPEFKKSVIIDYHFENIQNLSFIVVDIDKEIKRVGDLEGNDIIGQYTTTLGNIISKPNKKVISEIKHKGKETGVIEITAEEIRETGHNFLFKINGTKLDKKDLFTSDPYFKIYKTSSSGNVLVYQSVVIKNTLNPNYEPVMMKLEELNNGDMFRELVFEFWDHDSVGEHDFIGLFTTNADTVLKGITREFPLINAKKAAKKSGSYKNSGVITFTDCRLVGQPTFIDYLSGGCEINLMVAIDCTASNGSPSTSTSLHYHTPSHPSQYAKSIFSVGSVLAPYDSDGNIEVLGFGGIHRGSTSHCFQFGSKKEVRGVEGVLLTYGEVIPSMSLSYPTNFKDIISYAAKKSLDGVTSKSQKYTILLILTDGEISDMNETVHEIVKASKQSPLSIVIIGIGEATFDNMNRLDGDDGNSLTDSSGQTATRDIVQFVPFNNFSANPEALATETLREIPQQLLGFMNQNNYLPMSHRLK.

2 C2 domains span residues 1 to 125 (MTTP…SEIK) and 130 to 253 (ETGV…PLIN). Asp-25, Asp-31, Asp-85, Asp-87, and Asp-100 together coordinate Ca(2+). A VWFA domain is found at 294 to 513 (NLMVAIDCTA…ETLREIPQQL (220 aa)).

The protein belongs to the copine family. The cofactor is Ca(2+).

The protein is Copine-B (cpnB-1) of Dictyostelium discoideum (Social amoeba).